A 240-amino-acid chain; its full sequence is Uridylate kinase (240 aa).

12-15 contacts ATP; the sequence is KLSG. The involved in allosteric activation by GTP stretch occupies residues 20–25; that stretch reads GEQGFG. Glycine 54 contacts UMP. 2 residues coordinate ATP: glycine 55 and arginine 59. Residues aspartate 74 and 135-142 each bind UMP; that span reads TGNPYFST. Positions 163, 169, and 172 each coordinate ATP.

It belongs to the UMP kinase family. In terms of assembly, homohexamer.

The protein resides in the cytoplasm. It carries out the reaction UMP + ATP = UDP + ADP. It participates in pyrimidine metabolism; CTP biosynthesis via de novo pathway; UDP from UMP (UMPK route): step 1/1. Its activity is regulated as follows. Allosterically activated by GTP. Inhibited by UTP. Functionally, catalyzes the reversible phosphorylation of UMP to UDP. In Bacillus anthracis, this protein is Uridylate kinase.